A 434-amino-acid polypeptide reads, in one-letter code: Gamma-glutamyl phosphate reductase (434 aa).

The protein belongs to the gamma-glutamyl phosphate reductase family.

The protein localises to the cytoplasm. It carries out the reaction L-glutamate 5-semialdehyde + phosphate + NADP(+) = L-glutamyl 5-phosphate + NADPH + H(+). It participates in amino-acid biosynthesis; L-proline biosynthesis; L-glutamate 5-semialdehyde from L-glutamate: step 2/2. In terms of biological role, catalyzes the NADPH-dependent reduction of L-glutamate 5-phosphate into L-glutamate 5-semialdehyde and phosphate. The product spontaneously undergoes cyclization to form 1-pyrroline-5-carboxylate. This Pelotomaculum thermopropionicum (strain DSM 13744 / JCM 10971 / SI) protein is Gamma-glutamyl phosphate reductase.